Reading from the N-terminus, the 369-residue chain is Protein V (369 aa).

2 disordered regions span residues 1 to 23 and 54 to 320; these read MDQD…GGRE and INTL…GHRR. 4 stretches are compositionally biased toward basic and acidic residues: residues 7 to 20, 99 to 110, 150 to 168, and 175 to 193; these read ISKE…EASG, AEAHARNVDKQN, GAED…RGED, and EEIR…RADN. Phosphoserine; by host occurs at positions 249, 257, and 260. Positions 318, 337, 341, 353, 355, 358, 362, and 365 each coordinate Zn(2+).

The protein belongs to the paramyxoviruses V protein family. As to quaternary structure, interacts with host IFIH1/MDA5 and DHX58/LGP2. Interacts with host IRF3. Interacts with host RIGI regulatory protein (via CARDs domain) and host TRIM25 (via SPRY domain); these interactions prevent TRIM25-mediated ubiquitination of RIG-I and disrupts downstream RIG-I signaling.

It localises to the host cytoplasm. Its function is as follows. Plays an essential role in the inhibition of host immune response. Prevents the establishment of cellular antiviral state by blocking interferon-alpha/beta (IFN-alpha/beta) production and signaling pathway. Interacts with host IFIH1/MDA5 and DHX58/LGP2 to inhibit the transduction pathway involved in the activation of IFN-beta promoter, thus protecting the virus against cell antiviral state. Also interacts with and inhibits host IRF3. Blocks the type I interferon signaling pathway by disrupting the RIG-I signaling pathway. This chain is Protein V (P/V/C), found in Cavia cutleri (Guinea pig).